The primary structure comprises 137 residues: Acidic phospholipase A2 CC-PLA2-1 (137 aa).

Positions 1–16 (MRTLWIVAVWLMGVEG) are cleaved as a signal peptide. 7 disulfides stabilise this stretch: cysteine 42–cysteine 130, cysteine 44–cysteine 60, cysteine 59–cysteine 110, cysteine 65–cysteine 137, cysteine 66–cysteine 103, cysteine 73–cysteine 96, and cysteine 90–cysteine 101. Residues tyrosine 43, glycine 45, and glycine 47 each coordinate Ca(2+). Residue histidine 63 is part of the active site. Aspartate 64 contributes to the Ca(2+) binding site. Aspartate 104 is an active-site residue.

Belongs to the phospholipase A2 family. Group II subfamily. D49 sub-subfamily. The cofactor is Ca(2+). In terms of processing, glycosylated (2.5%). Expressed by the venom gland.

The protein localises to the secreted. The catalysed reaction is a 1,2-diacyl-sn-glycero-3-phosphocholine + H2O = a 1-acyl-sn-glycero-3-phosphocholine + a fatty acid + H(+). Its function is as follows. Snake venom phospholipase A2 (PLA2) that inhibits blood coagulation and platelet aggregation induced by ADP and arachidonic acid. Inhibits tumor cell adhesion and migration in a dose-dependent manner. Abolishes the attachment of human brain microvascular endothelial cells (HBMEC) to fibrinogen (IC(50)=0.12 uM) and dramatically reduces its adhesion to fibronectin (IC(50)=0.12 uM), whereas no effect is observed on type I collagen, vitronectin or laminin 1. Also blocks the cell migration toward fibronectin and fibrinogen. These effects are not dependent of the catalytic activity, but are mediated by alpha-5/beta-1 (ITGA5/ITGB1) and alpha-v-containing (ITGAV) integrins. Also shows anti-angiogenic activity in chicken chorioallantoix membrane assay. Has a relatively high enzymatic activity. PLA2 catalyzes the calcium-dependent hydrolysis of the 2-acyl groups in 3-sn-phosphoglycerides. This is Acidic phospholipase A2 CC-PLA2-1 from Cerastes cerastes (Horned desert viper).